Consider the following 821-residue polypeptide: Bifunctional dethiobiotin synthetase/7,8-diamino-pelargonic acid aminotransferase, mitochondrial (821 aa).

The dethiobiotin synthetase stretch occupies residues 28 to 283 (SPAFAVFGAN…VHVLPPIPED (256 aa)). 39–44 (GVGKTL) is a binding site for ATP. Threonine 43 is a Mg(2+) binding site. Threonine 72 serves as a coordination point for substrate. Glutamate 194 lines the Mg(2+) pocket. Position 194-197 (194-197 (ETAG)) interacts with ATP. A 7,8-diamino-pelargonic acid aminotransferase region spans residues 316–820 (RLNSMQRKSK…AKVHRRLQKL (505 aa)). Residue 374-375 (WW) coordinates (8S)-8-amino-7-oxononanoate. Residue 436 to 437 (GS) coordinates pyridoxal 5'-phosphate. Tyrosine 482 provides a ligand contact to (8S)-8-amino-7-oxononanoate. Aspartate 626 provides a ligand contact to pyridoxal 5'-phosphate. (8S)-8-amino-7-oxononanoate is bound by residues lysine 655 and glycine 689. Residue lysine 655 is modified to N6-(pyridoxal phosphate)lysine. Residue serine 691 participates in pyridoxal 5'-phosphate binding. Arginine 787 provides a ligand contact to (8S)-8-amino-7-oxononanoate.

It in the N-terminal section; belongs to the dethiobiotin synthetase family. In the C-terminal section; belongs to the class-III pyridoxal-phosphate-dependent aminotransferase family. BioA subfamily. It depends on Mg(2+) as a cofactor. Pyridoxal 5'-phosphate is required as a cofactor.

The protein localises to the mitochondrion. It carries out the reaction (7R,8S)-7,8-diammoniononanoate + CO2 + ATP = (4R,5S)-dethiobiotin + ADP + phosphate + 3 H(+). The enzyme catalyses (8S)-8-amino-7-oxononanoate + S-adenosyl-L-methionine = S-adenosyl-4-methylsulfanyl-2-oxobutanoate + (7R,8S)-7,8-diammoniononanoate. It functions in the pathway cofactor biosynthesis; biotin biosynthesis; biotin from 7,8-diaminononanoate: step 1/2. The protein operates within cofactor biosynthesis; biotin biosynthesis; 7,8-diaminononanoate from 8-amino-7-oxononanoate (SAM route): step 1/1. Its function is as follows. Bifunctional enzyme that catalyzes two different reactions involved in the biotin biosynthesis. Catalyzes a mechanistically unusual reaction, the ATP-dependent insertion of CO2 between the N7 and N8 nitrogen atoms of 7,8-diaminopelargonic acid (DAPA) to form an ureido ring. In terms of biological role, catalyzes the transfer of the alpha-amino group from S-adenosyl-L-methionine (SAM) to 7-keto-8-aminopelargonic acid (KAPA) to form 7,8-diaminopelargonic acid (DAPA). It is the only aminotransferase known to utilize SAM as an amino donor. The protein is Bifunctional dethiobiotin synthetase/7,8-diamino-pelargonic acid aminotransferase, mitochondrial (BIO3-BIO1) of Oryza sativa subsp. japonica (Rice).